The following is a 624-amino-acid chain: Bifunctional 3'-phosphoadenosine 5'-phosphosulfate synthase 1 (624 aa).

Residue Met-1 is modified to N-acetylmethionine. The adenylyl-sulfate kinase stretch occupies residues 1-225 (MEIPGSLCKK…VVELLQERDI (225 aa)). Lys-12 is modified (N6-acetyllysine). 62–67 (GAGKTT) contacts ATP. Residues 89-92 (DNIR), Phe-101, 106-109 (REEN), 132-133 (IS), Lys-171, and 184-185 (GF) each bind adenosine 5'-phosphosulfate. ATP is bound by residues Cys-207, Cys-212, 419–422 (QLRN), 521–525 (GRDPA), and Ala-563. Residues 234-624 (VKELYVPENK…TEYYKSLEKA (391 aa)) are sulfate adenylyltransferase.

In the N-terminal section; belongs to the APS kinase family. The protein in the C-terminal section; belongs to the sulfate adenylyltransferase family. As to quaternary structure, homodimer. Expressed in testis, pancreas, kidney, thymus, prostate, ovary, small intestine, colon, leukocytes and liver. Also expressed in high endothelial venules (HEV) cells and in cartilage.

It catalyses the reaction sulfate + ATP + H(+) = adenosine 5'-phosphosulfate + diphosphate. It carries out the reaction adenosine 5'-phosphosulfate + ATP = 3'-phosphoadenylyl sulfate + ADP + H(+). The protein operates within sulfur metabolism; sulfate assimilation. With respect to regulation, inhibited by chlorate. The kinase activity is subject to inhibition by the substrate adenylyl sulfate. Bifunctional enzyme with both ATP sulfurylase and APS kinase activity, which mediates two steps in the sulfate activation pathway. The first step is the transfer of a sulfate group to ATP to yield adenosine 5'-phosphosulfate (APS), and the second step is the transfer of a phosphate group from ATP to APS yielding 3'-phosphoadenylylsulfate (PAPS: activated sulfate donor used by sulfotransferase). In mammals, PAPS is the sole source of sulfate; APS appears to be only an intermediate in the sulfate-activation pathway. Required for normal biosynthesis of sulfated L-selectin ligands in endothelial cells. The sequence is that of Bifunctional 3'-phosphoadenosine 5'-phosphosulfate synthase 1 (PAPSS1) from Homo sapiens (Human).